The primary structure comprises 78 residues: Teretoxin Tsu6.15 (78 aa).

Positions 1–21 (MATSGRLLCFCLVLGLVFESL) are cleaved as a signal peptide. Positions 22–47 (GYSEARPPRDRKRTVTAKRYDPLAQR) are excised as a propeptide.

The protein belongs to the teretoxin M (TM) superfamily. Contains 3 disulfide bonds. Expressed by the venom duct.

It is found in the secreted. The sequence is that of Teretoxin Tsu6.15 from Terebra subulata (Chocolate spotted auger).